The following is a 199-amino-acid chain: Dephospho-CoA kinase (199 aa).

In terms of domain architecture, DPCK spans 3-199 (ILGLTGSIGM…ATAKMPQRRA (197 aa)). 11 to 16 (GMGKST) is an ATP binding site.

Belongs to the CoaE family.

It is found in the cytoplasm. It carries out the reaction 3'-dephospho-CoA + ATP = ADP + CoA + H(+). It functions in the pathway cofactor biosynthesis; coenzyme A biosynthesis; CoA from (R)-pantothenate: step 5/5. Its function is as follows. Catalyzes the phosphorylation of the 3'-hydroxyl group of dephosphocoenzyme A to form coenzyme A. In Rhodopseudomonas palustris (strain BisB18), this protein is Dephospho-CoA kinase.